We begin with the raw amino-acid sequence, 347 residues long: Phenylalanine--tRNA ligase alpha subunit (347 aa).

Glu261 provides a ligand contact to Mg(2+).

The protein belongs to the class-II aminoacyl-tRNA synthetase family. Phe-tRNA synthetase alpha subunit type 1 subfamily. Tetramer of two alpha and two beta subunits. Requires Mg(2+) as cofactor.

The protein resides in the cytoplasm. The catalysed reaction is tRNA(Phe) + L-phenylalanine + ATP = L-phenylalanyl-tRNA(Phe) + AMP + diphosphate + H(+). The sequence is that of Phenylalanine--tRNA ligase alpha subunit from Streptococcus equi subsp. equi (strain 4047).